The primary structure comprises 498 residues: Glycerol kinase (498 aa).

An ADP-binding site is contributed by threonine 12. ATP contacts are provided by threonine 12, threonine 13, and serine 14. Threonine 12 serves as a coordination point for sn-glycerol 3-phosphate. Arginine 16 provides a ligand contact to ADP. Sn-glycerol 3-phosphate contacts are provided by arginine 82, glutamate 83, tyrosine 134, and aspartate 243. The glycerol site is built by arginine 82, glutamate 83, tyrosine 134, aspartate 243, and glutamine 244. Threonine 265 and glycine 308 together coordinate ADP. 4 residues coordinate ATP: threonine 265, glycine 308, glutamine 312, and glycine 409. Glycine 409 and asparagine 413 together coordinate ADP.

It belongs to the FGGY kinase family.

It catalyses the reaction glycerol + ATP = sn-glycerol 3-phosphate + ADP + H(+). It participates in polyol metabolism; glycerol degradation via glycerol kinase pathway; sn-glycerol 3-phosphate from glycerol: step 1/1. Inhibited by fructose 1,6-bisphosphate (FBP). In terms of biological role, key enzyme in the regulation of glycerol uptake and metabolism. Catalyzes the phosphorylation of glycerol to yield sn-glycerol 3-phosphate. The sequence is that of Glycerol kinase from Petrotoga mobilis (strain DSM 10674 / SJ95).